The following is a 584-amino-acid chain: DNA ligase (584 aa).

ATP is bound at residue Glu249. Lys251 acts as the N6-AMP-lysine intermediate in catalysis. ATP contacts are provided by Arg256, Arg271, Glu301, Phe341, Arg416, and Lys422.

Belongs to the ATP-dependent DNA ligase family. The cofactor is Mg(2+).

The catalysed reaction is ATP + (deoxyribonucleotide)n-3'-hydroxyl + 5'-phospho-(deoxyribonucleotide)m = (deoxyribonucleotide)n+m + AMP + diphosphate.. Its function is as follows. DNA ligase that seals nicks in double-stranded DNA during DNA replication, DNA recombination and DNA repair. In Pyrobaculum neutrophilum (strain DSM 2338 / JCM 9278 / NBRC 100436 / V24Sta) (Thermoproteus neutrophilus), this protein is DNA ligase.